Consider the following 312-residue polypeptide: Glyoxylate/hydroxypyruvate reductase A (312 aa).

Arg227 is a catalytic residue. His275 serves as the catalytic Proton donor.

It belongs to the D-isomer specific 2-hydroxyacid dehydrogenase family. GhrA subfamily.

It is found in the cytoplasm. It catalyses the reaction glycolate + NADP(+) = glyoxylate + NADPH + H(+). It carries out the reaction (R)-glycerate + NAD(+) = 3-hydroxypyruvate + NADH + H(+). The enzyme catalyses (R)-glycerate + NADP(+) = 3-hydroxypyruvate + NADPH + H(+). Functionally, catalyzes the NADPH-dependent reduction of glyoxylate and hydroxypyruvate into glycolate and glycerate, respectively. The polypeptide is Glyoxylate/hydroxypyruvate reductase A (Salmonella paratyphi B (strain ATCC BAA-1250 / SPB7)).